Here is a 270-residue protein sequence, read N- to C-terminus: NAD kinase (270 aa).

The active-site Proton acceptor is aspartate 63. Residues 63–64 (DG), 131–132 (NE), lysine 142, arginine 159, aspartate 161, 172–177 (TAYAMS), alanine 196, and glutamine 230 contribute to the NAD(+) site.

It belongs to the NAD kinase family. Requires a divalent metal cation as cofactor.

Its subcellular location is the cytoplasm. It catalyses the reaction NAD(+) + ATP = ADP + NADP(+) + H(+). In terms of biological role, involved in the regulation of the intracellular balance of NAD and NADP, and is a key enzyme in the biosynthesis of NADP. Catalyzes specifically the phosphorylation on 2'-hydroxyl of the adenosine moiety of NAD to yield NADP. This Methanoculleus marisnigri (strain ATCC 35101 / DSM 1498 / JR1) protein is NAD kinase.